Reading from the N-terminus, the 415-residue chain is Serine hydroxymethyltransferase (415 aa).

Residues L121 and 125-127 (GHL) contribute to the (6S)-5,6,7,8-tetrahydrofolate site. The residue at position 229 (K229) is an N6-(pyridoxal phosphate)lysine. 352-354 (TPF) is a (6S)-5,6,7,8-tetrahydrofolate binding site.

The protein belongs to the SHMT family. As to quaternary structure, homodimer. It depends on pyridoxal 5'-phosphate as a cofactor.

The protein localises to the cytoplasm. It catalyses the reaction (6R)-5,10-methylene-5,6,7,8-tetrahydrofolate + glycine + H2O = (6S)-5,6,7,8-tetrahydrofolate + L-serine. It participates in one-carbon metabolism; tetrahydrofolate interconversion. It functions in the pathway amino-acid biosynthesis; glycine biosynthesis; glycine from L-serine: step 1/1. Catalyzes the reversible interconversion of serine and glycine with tetrahydrofolate (THF) serving as the one-carbon carrier. This reaction serves as the major source of one-carbon groups required for the biosynthesis of purines, thymidylate, methionine, and other important biomolecules. Also exhibits THF-independent aldolase activity toward beta-hydroxyamino acids, producing glycine and aldehydes, via a retro-aldol mechanism. This is Serine hydroxymethyltransferase from Chromobacterium violaceum (strain ATCC 12472 / DSM 30191 / JCM 1249 / CCUG 213 / NBRC 12614 / NCIMB 9131 / NCTC 9757 / MK).